The chain runs to 61 residues: Conotoxin 3 (61 aa).

Residues 1 to 21 form the signal peptide; sequence MRCLPVFVILLLLIASVPSDA. The propeptide occupies 22–48; the sequence is VQLKTKDDMPLPSFNGNARRTPRMLSN. W58 carries the 6'-bromotryptophan modification.

It belongs to the conotoxin T superfamily. Contains 2 disulfide bonds that can be either 'C1-C3, C2-C4' or 'C1-C4, C2-C3', since these disulfide connectivities have been observed for conotoxins with cysteine framework V (for examples, see AC P0DQQ7 and AC P81755). Post-translationally, contains 2 disulfide bonds. As to expression, expressed by the venom duct.

The protein resides in the secreted. The sequence is that of Conotoxin 3 from Conus textile (Cloth-of-gold cone).